The chain runs to 305 residues: Glutaminase (305 aa).

Substrate contacts are provided by Ser-61, Asn-113, Glu-158, Asn-165, Tyr-189, Tyr-241, and Val-259.

The protein belongs to the glutaminase family. Homotetramer.

It carries out the reaction L-glutamine + H2O = L-glutamate + NH4(+). The chain is Glutaminase from Clostridium botulinum (strain Loch Maree / Type A3).